Here is a 241-residue protein sequence, read N- to C-terminus: Uridylate kinase (241 aa).

Residue 12 to 15 participates in ATP binding; sequence KLSG. The tract at residues 20–25 is involved in allosteric activation by GTP; sequence GDKGQG. G54 contacts UMP. Residues G55 and R59 each coordinate ATP. UMP-binding positions include D74 and 135–142; that span reads TGSPYFST. ATP-binding residues include N163, Y169, and D172.

It belongs to the UMP kinase family. Homohexamer.

Its subcellular location is the cytoplasm. The enzyme catalyses UMP + ATP = UDP + ADP. It functions in the pathway pyrimidine metabolism; CTP biosynthesis via de novo pathway; UDP from UMP (UMPK route): step 1/1. Its activity is regulated as follows. Allosterically activated by GTP. Inhibited by UTP. In terms of biological role, catalyzes the reversible phosphorylation of UMP to UDP. The sequence is that of Uridylate kinase from Leuconostoc mesenteroides subsp. mesenteroides (strain ATCC 8293 / DSM 20343 / BCRC 11652 / CCM 1803 / JCM 6124 / NCDO 523 / NBRC 100496 / NCIMB 8023 / NCTC 12954 / NRRL B-1118 / 37Y).